The following is a 1388-amino-acid chain: Collagen alpha-1(XV) chain (1388 aa).

A signal peptide spans 1–27 (MAPRRNNGQCWCLLMLLSVSTPLPAVT). A Laminin G-like domain is found at 66-249 (AYSFGPGANV…SSASGETSGL (184 aa)). The segment at 223-250 (TVHPDPRTPEELCDPEESSASGETSGLQ) is disordered. The interval 229–555 (RTPEELCDPE…WITPAQREHV (327 aa)) is nonhelical region 1 (NC1). A compositionally biased stretch (polar residues) spans 240 to 249 (SSASGETSGL). 2 O-linked (Xyl...) (chondroitin sulfate) serine glycosylation sites follow: Ser243 and Ser247. O-linked (GalNAc...) threonine glycosylation occurs at Thr265. Residues 266-301 (QASPKEAKVEPINTPPTPSSPFEDMELSGEPVPEGT) are disordered. N-linked (GlcNAc...) asparagine glycosylation is found at Asn306 and Asn324. Ser343 carries an O-linked (Xyl...) (chondroitin sulfate) serine glycan. Tandem repeats lie at residues 358–408 (AATA…EERL), 409–459 (AATA…EDSL), 460–509 (TTAA…EEDL), and 510–555 (AAAT…REHV). The interval 358–555 (AATAAGLAEV…WITPAQREHV (198 aa)) is 4 X tandem repeats. Residues 371–795 (TAGEAEASSV…VGPPGPRGPP (425 aa)) are disordered. A compositionally biased stretch (polar residues) spans 379 to 392 (SVPTGGPTLSMSTE). Positions 409–420 (AATAAGEAEALA) are enriched in low complexity. Residues 452 to 472 (GPSSEDSLTTAAAATEVSLST) show a composition bias toward polar residues. Positions 510-527 (AAATTEEPLITAGGEESG) are enriched in low complexity. A compositionally biased stretch (pro residues) spans 528-540 (SPPPDGPPLPLPT). The segment at 556–573 (GMKGQAGPKGEKGDAGEE) is triple-helical region 1 (COL1). Residues 574–618 (LPGPPEPSGPVGPTAGAEAEGSGLGWGSDVGSGSGDLVGSEQLLR) are nonhelical region 2 (NC2). Residues 595–609 (SGLGWGSDVGSGSGD) show a composition bias toward gly residues. 2 consecutive Collagen-like domains span residues 619–680 (GPPG…MKGE) and 681–731 (KGAR…PPGP). The interval 619–732 (GPPGPPGPPG…PGPPGPPGPG (114 aa)) is triple-helical region 2 (COL2). Residues 620 to 630 (PPGPPGPPGLP) show a composition bias toward pro residues. Asn687 is a glycosylation site (N-linked (GlcNAc...) asparagine). Residues 716–731 (VMGPPGPPGPPGPPGP) show a composition bias toward pro residues. Residues 733-763 (CTMGLGFEDTEGSGSTQLLNEPKLSRPTAAI) are nonhelical region 3 (NC3). Ser745 is a glycosylation site (O-linked (Xyl...) (chondroitin sulfate) serine). The triple-helical region 3 (COL3) stretch occupies residues 764–798 (GLKGEKGDRGPKGERGMDGASIVGPPGPRGPPGHI). Positions 766 to 780 (KGEKGDRGPKGERGM) are enriched in basic and acidic residues. Positions 799 to 822 (KVLSNSLINITHGFMNFSDIPELV) are nonhelical region 4 (NC4). N-linked (GlcNAc...) asparagine glycans are attached at residues Asn807 and Asn814. The Collagen-like 3 domain occupies 823 to 865 (GPPGPDGLPGLPGFPGPRGPKGDTGLPGFPGLKGEQGEKGEPG). Residues 823-867 (GPPGPDGLPGLPGFPGPRGPKGDTGLPGFPGLKGEQGEKGEPGAI) form a triple-helical region 4 (COL4) region. Residues 827–840 (PDGLPGLPGFPGPR) are compositionally biased toward pro residues. The segment at 827-864 (PDGLPGLPGFPGPRGPKGDTGLPGFPGLKGEQGEKGEP) is disordered. The interval 868-878 (LTEDIPLERLM) is nonhelical region 5 (NC5). The Collagen-like 4 domain occupies 879–927 (GKKGEPGMHGAPGPMGPKGPPGHKGEFGLPGRPGRPGLNGLKGTKGDPG). The interval 879–949 (GKKGEPGMHG…PGPPGPPGAV (71 aa)) is triple-helical region 5 (COL5). The interval 950-983 (INIKGAIFPIPVRPHCKMPVDTAHPGSPELITFH) is nonhelical region 6 (NC6). The triple-helical region 6 (COL6) stretch occupies residues 984 to 1013 (GVKGEKGSWGLPGSKGEKGDQGAQGPPGPP). Disordered regions lie at residues 988-1016 (EKGS…PLDL) and 1029-1133 (ENGD…GSRN). Residues 1014 to 1027 (LDLAYLRHFLNNLK) are nonhelical region 7 (NC7). A triple-helical region 7 (COL7) region spans residues 1028-1045 (GENGDKGFKGEKGEKGDI). Positions 1029-1044 (ENGDKGFKGEKGEKGD) are enriched in basic and acidic residues. N-linked (GlcNAc...) asparagine glycosylation occurs at Asn1046. Positions 1046 to 1052 (NGSFLMS) are nonhelical region 8 (NC8). A triple-helical region 8 (COL8) region spans residues 1053–1107 (GPPGLPGNPGPAGQKGETVVGPQGPPGAPGLPGPPGFGRPGDPGPPGPPGPPGPP). Pro residues-rich tracts occupy residues 1075–1107 (QGPP…PGPP) and 1117–1126 (PGPPGPPGQP). Residues 1108 to 1117 (AILGAAVALP) are nonhelical region 9 (NC9). The segment at 1118–1132 (GPPGPPGQPGLPGSR) is triple-helical region 9 (COL9). The nonhelical region 10 (NC10) stretch occupies residues 1133-1388 (NLVTAFSNMD…ENSFMTDARK (256 aa)). 2 disulfides stabilise this stretch: Cys1237-Cys1377 and Cys1339-Cys1369.

It belongs to the multiplexin collagen family. Trimer; disulfide-linked. In terms of assembly, interacts moderately with EFEMP2. In terms of processing, prolines at the third position of the tripeptide repeating unit (G-X-Y) are hydroxylated in some or all of the chains. O-glycosylated; with core 1 or possibly core 8 glycans. Contains chondroitin sulfate. In terms of tissue distribution, detected in fibroblasts and urine (at protein level). Detected in placenta (at protein level). Expressed predominantly in internal organs such as adrenal gland, pancreas and kidney.

The protein resides in the secreted. The protein localises to the extracellular space. It is found in the extracellular matrix. Its function is as follows. Structural protein that stabilizes microvessels and muscle cells, both in heart and in skeletal muscle. Functionally, restin potently inhibits angiogenesis. The sequence is that of Collagen alpha-1(XV) chain (COL15A1) from Homo sapiens (Human).